The chain runs to 1082 residues: CRISPR-associated endonuclease Cas9 (1082 aa).

Asp16 acts as the For RuvC-like nuclease domain in catalysis. Asp16, Glu504, and Glu508 together coordinate Mg(2+). Positions 512 to 667 (SFKDRKEIEK…DEDGFKERNL (156 aa)) constitute an HNH Cas9-type domain. The active-site Proton acceptor for HNH nuclease domain is His588. Mg(2+) is bound at residue His723.

This sequence belongs to the CRISPR-associated protein Cas9 family. Subtype II-C subfamily. As to quaternary structure, monomer. Binds crRNA and tracrRNA. It depends on Mg(2+) as a cofactor.

CRISPR (clustered regularly interspaced short palindromic repeat) is an adaptive immune system that provides protection against mobile genetic elements (viruses, transposable elements and conjugative plasmids). CRISPR clusters contain spacers, sequences complementary to antecedent mobile elements, and target invading nucleic acids. CRISPR clusters are transcribed and processed into CRISPR RNA (crRNA). In type II CRISPR systems correct processing of pre-crRNA requires a trans-encoded small RNA (tracrRNA), endogenous ribonuclease 3 (rnc) and this protein. The tracrRNA serves as a guide for ribonuclease 3-aided processing of pre-crRNA. Subsequently Cas9/crRNA/tracrRNA endonucleolytically cleaves linear or circular dsDNA target complementary to the spacer; Cas9 is inactive in the absence of the 2 guide RNAs (gRNA). Cas9 recognizes the protospacer adjacent motif (PAM) in the CRISPR repeat sequences to help distinguish self versus nonself, as targets within the bacterial CRISPR locus do not have PAMs. PAM recognition is also required for catalytic activity. Cuts target DNA in Cas9:gRNAs mixing experiments with C.jejuni strain NCTC 11168 and P.multocoda strain Pm70. This chain is CRISPR-associated endonuclease Cas9, found in Neisseria meningitidis serogroup A / serotype 4A (strain DSM 15465 / Z2491).